The primary structure comprises 594 residues: MNADFLGLLLLYLTILLCAAPLLGRHIRQAMNGERTWLTAWGQPLERGLYRLAGVDPAAEMDWRRYAVAMLVFNVLGVLAVYALQRLQGWLPLNPAGLPGVAPDSALNTAISFVTNTNWQGYAGESTMSYLTQMLALTVQNFVSAATGIAVLIALVRGLARHSAATLGNFWADLVRATLYVLLPLSFILALALVSQGVVQNLDPYVEAQTVQAQQYETARLDAQGQPMTGPAGQPLTDTVVTRVQTLPMGPVASQEAIKLLGTNGGGFFNANSAHPYENPNAWSNLLEMLAILLIPAALCWTFGEMVGSRRQGVAILAAMTVLFAGFAASAAYFEQQPTPALRQAEAALLADGGNLEGKEARFGVAATALFATVTTAASCGAVNGMHDSFSALGGVTPLLQMQLGEVIYGGVGSGLYGMLAFAILAVFIAGLMIGRTPEYLGKKIEALDMQMVALVILATPALVLAGTAVAVLADAGRAGVLNPGAHGFSEILYAMSSAANNNGSAFAGLSANTPFYNVLLGLAMWFGRYTIIVAILALAGSLAAKPRLPASVGGMPTTGPLFVALLVGAVLLVGALTYVPALALGPVAEHLQP.

A run of 10 helical transmembrane segments spans residues 3–23 (ADFLGLLLLYLTILLCAAPLL), 67–87 (AVAMLVFNVLGVLAVYALQRL), 136–156 (ALTVQNFVSAATGIAVLIALV), 179–199 (LYVLLPLSFILALALVSQGVV), 287–307 (LEMLAILLIPAALCWTFGEMV), 314–334 (VAILAAMTVLFAGFAASAAYF), 415–435 (GLYGMLAFAILAVFIAGLMIG), 453–473 (VALVILATPALVLAGTAVAVL), 519–539 (VLLGLAMWFGRYTIIVAILAL), and 562–582 (LFVALLVGAVLLVGALTYVPA).

This sequence belongs to the KdpA family. In terms of assembly, the system is composed of three essential subunits: KdpA, KdpB and KdpC.

The protein localises to the cell inner membrane. In terms of biological role, part of the high-affinity ATP-driven potassium transport (or Kdp) system, which catalyzes the hydrolysis of ATP coupled with the electrogenic transport of potassium into the cytoplasm. This subunit binds the periplasmic potassium ions and delivers the ions to the membrane domain of KdpB through an intramembrane tunnel. The polypeptide is Potassium-transporting ATPase potassium-binding subunit (Bordetella parapertussis (strain 12822 / ATCC BAA-587 / NCTC 13253)).